The chain runs to 53 residues: Large ribosomal subunit protein bL32 (53 aa).

Residues 1 to 27 (MAVQQNKKSRSRRDMRRSHDALTTAAV) are disordered. A compositionally biased stretch (basic residues) spans 7–16 (KKSRSRRDMR).

It belongs to the bacterial ribosomal protein bL32 family.

The sequence is that of Large ribosomal subunit protein bL32 from Glaesserella parasuis serovar 5 (strain SH0165) (Haemophilus parasuis).